The following is a 725-amino-acid chain: MQSTANYLWMLSDILGQGATANVYRGRNKKTGDLYAVKVFNSLSFQRPADVQMREFEVLKKLNHKNIVKLFAIEEEMSSRHKVLVMEFCPCASLYSVLEEPTNSYGLPESEFLIVSRDVVAGMNHLRENGIIHRDIKPGNIMREIGEDGKSVYKLTDFGAARELEDDEQFVSLYGTEEYLHPDMYERAVLRKEHQKKYSATVDLWSIGVTFYHAATGSLPFRPFEGPRRNKEVMYKIIAGKPSGAISGVQRAENGPIEWSGELPATCNLSMGLQTLFTPVLANILEADQEKCWGFEQFFAVTNDIFNRIVVHVFSLQQMTPHKIYINTYDKVPDFHDLVYKQTKIPGQNQELLFEGRRLVLEQGRLAQHFPITTDENPIFVLTREMVSVIGLRFDEIVIPKPISHYDLDVDANMAKAVTGVACYYCRIAASLLLVLDLMRKGIRWLSELMKEEYNENVHRNTEVSLKLNFCNRTTEKDLKIYEQLMQTSVESEVYAIHAKLLNLSSTQEGLKSSLQEVKNKLTPGGTLMDSWINTEGIHAADRNVEKLQVLLSLITEIYCQFKKDKAQRRLSYNEEQIHKFDKQKLCLHAAKAYSLFKDECVGKYEVFRSKTLEWMRKMIHVRKQLFSIKSKCFDIEEEASKCQHYINQYQEKMSPKMFAAPSGMKSAVNPIYSSPNTLVEMTLGMRKLKEDMEGVVKELEENNHILERFGALTIDGDFRNVDCI.

Residues 9-306 (WMLSDILGQG…QFFAVTNDIF (298 aa)) form the Protein kinase domain. ATP-binding positions include 15–23 (LGQGATANV) and K38. D135 serves as the catalytic Proton acceptor. A Ubiquitin-like domain is found at 309–385 (IVVHVFSLQQ…ENPIFVLTRE (77 aa)). Positions 635–709 (DIEEEASKCQ…LEENNHILER (75 aa)) form a coiled coil.

The protein belongs to the protein kinase superfamily. Ser/Thr protein kinase family. I-kappa-B kinase subfamily. As to quaternary structure, homodimer.

Its subcellular location is the cytoplasm. The enzyme catalyses L-seryl-[protein] + ATP = O-phospho-L-seryl-[protein] + ADP + H(+). The catalysed reaction is L-threonyl-[protein] + ATP = O-phospho-L-threonyl-[protein] + ADP + H(+). Serine/threonine kinase that plays an essential role in regulating inflammatory responses to foreign agents. Following activation of toll-like receptors by viral or bacterial components, associates with traf3 and tank and phosphorylates interferon regulatory factors (IRFs) irf3 and irf7 as well as ddx3x. This activity allows subsequent homodimerization and nuclear translocation of the IRFs leading to transcriptional activation of pro-inflammatory and antiviral genes including ifna and ifnb. In order to establish such an antiviral state, TBK1 form several different complexes whose composition depends on the type of cell and cellular stimuli. The sequence is that of Serine/threonine-protein kinase TBK1 (tbk1) from Xenopus laevis (African clawed frog).